The sequence spans 333 residues: MRRGQNGVALITVLLVVAVVTIVCAGLIIRQQLAIRSSANQLHVRQAWHYALGGERLAEAVLRRDLRQGGENTREPVDHLGEAWARPMTPFKLDDGGELRVRIEDPSGRFNLNGLVRKRKVKPDSVKQFRRLLATLGMKEEIVQGLPDRLADWLDADQNPQGEQGAEDNQYLLEAPAYRAANRSFKDVSELRLLKLSEADYRRLLPFVSALPEDAPLNVNTASVPVLAAMFEIDPGQAENIVDARGREGFQSKDDFTKHLTQLGSKTGNVSYAVGTRYFQVISEVSLGDRRQVLVSTLQRGKDGKIRVMARDMGQGGLPIPSTGGDDWKKDER.

A propeptide spans 1-7 (MRRGQNG) (leader sequence). The helical transmembrane segment at 8–29 (VALITVLLVVAVVTIVCAGLII) threads the bilayer. The Periplasmic portion of the chain corresponds to 30–333 (RQQLAIRSSA…GGDDWKKDER (304 aa)). The interval 313 to 333 (MGQGGLPIPSTGGDDWKKDER) is disordered.

The protein belongs to the GSP K family. In terms of assembly, type II secretion is composed of four main components: the outer membrane complex, the inner membrane complex, the cytoplasmic secretion ATPase and the periplasm-spanning pseudopilus. Interacts with the tip of the type II pseudopilus subunits XcpV, XcpU and XcpW. Interacts with core component XcpT. In terms of processing, cleaved by prepilin peptidase.

The protein resides in the cell inner membrane. In terms of biological role, component of the type II secretion system required for the energy-dependent secretion of extracellular factors such as proteases and toxins from the periplasm. Plays a role in pseudopilus assembly and seems to control its length. Interacts with the pseudopilus tip complex that is critical for the recognition and binding of secretion substrates. Type II pseudopilus confers increased bacterial adhesive capabilities. The protein is Type II secretion system protein K (xcpX) of Pseudomonas aeruginosa (strain ATCC 15692 / DSM 22644 / CIP 104116 / JCM 14847 / LMG 12228 / 1C / PRS 101 / PAO1).